A 78-amino-acid polypeptide reads, in one-letter code: Acyl carrier protein 1 (78 aa).

Residues 2-77 (STIEERVKKI…EAIDYIVAHQ (76 aa)) enclose the Carrier domain. An O-(pantetheine 4'-phosphoryl)serine modification is found at Ser-37.

It belongs to the acyl carrier protein (ACP) family. Post-translationally, 4'-phosphopantetheine is transferred from CoA to a specific serine of apo-ACP by AcpS. This modification is essential for activity because fatty acids are bound in thioester linkage to the sulfhydryl of the prosthetic group.

The protein localises to the cytoplasm. It participates in lipid metabolism; fatty acid biosynthesis. Carrier of the growing fatty acid chain in fatty acid biosynthesis. The protein is Acyl carrier protein 1 of Pseudomonas aeruginosa (strain ATCC 15692 / DSM 22644 / CIP 104116 / JCM 14847 / LMG 12228 / 1C / PRS 101 / PAO1).